Here is a 244-residue protein sequence, read N- to C-terminus: Protein A47 (244 aa).

The protein belongs to the orthopoxvirus A47 protein family.

This is Protein A47 from Variola virus.